The sequence spans 147 residues: Ribonuclease 4 (147 aa).

The N-terminal stretch at 1-28 is a signal peptide; the sequence is MALQRTQAFLLLLLLTLLGLGLVQPSYG. Glutamine 29 bears the Pyrrolidone carboxylic acid mark. DUMP-binding residues include arginine 35, histidine 40, lysine 68, asparagine 71, and threonine 72. Histidine 40 functions as the Proton acceptor in the catalytic mechanism. Intrachain disulfides connect cysteine 53-cysteine 109, cysteine 67-cysteine 120, cysteine 85-cysteine 135, and cysteine 92-cysteine 99. The Proton donor role is filled by histidine 144. Phenylalanine 145 serves as a coordination point for dUMP.

It belongs to the pancreatic ribonuclease family.

Its subcellular location is the secreted. In terms of biological role, cleaves preferentially after uridine bases. Has antimicrobial activity against uropathogenic E.coli (UPEC). Probably contributes to urinary tract sterility. The chain is Ribonuclease 4 (RNASE4) from Bos taurus (Bovine).